The chain runs to 215 residues: Proapoptotic nucleolar protein 1 (215 aa).

A disordered region spans residues 35-215; that stretch reads RKGTPTARCL…RLPAPRSAST (181 aa). Pro residues predominate over residues 169-180; the sequence is PRPPQHLSPPQP. Residues 185 to 215 are necessary for nucleolar localization; it reads MGAAEGSRRADTHHARRRRRARLPAPRSAST.

In terms of tissue distribution, widely expressed.

The protein localises to the nucleus. It is found in the nucleolus. In terms of biological role, apoptosis-inducing protein that modulates the tumor suppressor function of CDKN2A/p14ARF. Enhances the stability of CDKN2A/p14ARF protein by protecting it from degradation. May act as a tumor suppressor. This Homo sapiens (Human) protein is Proapoptotic nucleolar protein 1.